Reading from the N-terminus, the 66-residue chain is Beta-mammal toxin Co1 (66 aa).

One can recognise an LCN-type CS-alpha/beta domain in the interval 1 to 66 (KEGYLVNHST…VWPLPKKTCN (66 aa)). Disulfide bonds link Cys12–Cys65, Cys16–Cys41, Cys25–Cys46, and Cys29–Cys48.

As to expression, expressed by the venom gland.

The protein resides in the secreted. Functionally, beta toxins bind voltage-independently at site-4 of sodium channels (Nav) and shift the voltage of activation toward more negative potentials thereby affecting sodium channel activation and promoting spontaneous and repetitive firing. This toxin acts on human Nav1.6/SCN8A voltage-gated sodium channels. In vivo, is lethal to mice 40 minutes after intraperitoneal injection at a dose of 5ug. No activity is observed when injected into crickets or woodlice. This is Beta-mammal toxin Co1 from Centruroides ornatus (Scorpion).